Consider the following 499-residue polypeptide: Probable aspartyl protease At4g16563 (499 aa).

Positions 1 to 26 (MKTCLIFFLYTTILQYYFHFSVSSLS) are cleaved as a signal peptide. One can recognise a Peptidase A1 domain in the interval 83–487 (YLISLSVGSS…DLLNRRVGFA (405 aa)). Residue Asp101 is part of the active site. Cysteines 111 and 119 form a disulfide. Residues Asn175 and Asn211 are each glycosylated (N-linked (GlcNAc...) asparagine). Asp353 is a catalytic residue. Cys396 and Cys445 are disulfide-bonded. Asn400 and Asn415 each carry an N-linked (GlcNAc...) asparagine glycan.

The protein belongs to the peptidase A1 family.

The sequence is that of Probable aspartyl protease At4g16563 from Arabidopsis thaliana (Mouse-ear cress).